The following is a 469-amino-acid chain: Glutamate--tRNA ligase 2 (469 aa).

The 'HIGH' region motif lies at 8 to 18; sequence PSPTGFLHVGG. Residues 250–254 carry the 'KMSKS' region motif; sequence KLSKR. Lysine 253 lines the ATP pocket.

This sequence belongs to the class-I aminoacyl-tRNA synthetase family. Glutamate--tRNA ligase type 1 subfamily. As to quaternary structure, monomer.

Its subcellular location is the cytoplasm. It catalyses the reaction tRNA(Glu) + L-glutamate + ATP = L-glutamyl-tRNA(Glu) + AMP + diphosphate. Its function is as follows. Catalyzes the attachment of glutamate to tRNA(Glu) in a two-step reaction: glutamate is first activated by ATP to form Glu-AMP and then transferred to the acceptor end of tRNA(Glu). The polypeptide is Glutamate--tRNA ligase 2 (Thermotoga sp. (strain RQ2)).